A 362-amino-acid chain; its full sequence is N-acylethanolamine-hydrolyzing acid amidase (362 aa).

An N-terminal signal peptide occupies residues 1–33; sequence MGTLATRAACHGAHLALALLLLLSLSGPWLSAV. N-linked (GlcNAc...) asparagine glycans are attached at residues Asn-42 and Asn-112. The active-site Nucleophile is Cys-131. Asn-314 and Asn-338 each carry an N-linked (GlcNAc...) asparagine glycan.

The protein belongs to the acid ceramidase family. As to quaternary structure, heterodimer of an alpha and a beta subunit, produced by autocatalytic cleavage. In terms of processing, N-glycosylated. Tunicamycin treatment causes a reduction in specific activity against N-palmitoylethanolamine. Autoproteolytic cleavage at pH 4.5 gives rise to the alpha and beta subunit. Cleavage gives rise to a conformation change that activates the enzyme. The same catalytic Cys residue mediates the autoproteolytic cleavage and subsequent hydrolysis of lipid substrates.

It localises to the lysosome. The protein resides in the membrane. It catalyses the reaction N-hexadecanoylethanolamine + H2O = ethanolamine + hexadecanoate. The catalysed reaction is an N-(long-chain fatty acyl)ethanolamine + H2O = a long-chain fatty acid + ethanolamine. The enzyme catalyses N-dodecanoylethanolamine + H2O = dodecanoate + ethanolamine. It carries out the reaction N-tetradecanoylethanolamine + H2O = tetradecanoate + ethanolamine. It catalyses the reaction an N-acylsphing-4-enine + H2O = sphing-4-enine + a fatty acid. The catalysed reaction is N-hexadecanoylsphing-4-enine + H2O = sphing-4-enine + hexadecanoate. The enzyme catalyses N-dodecanoylsphing-4-enine + H2O = dodecanoate + sphing-4-enine. Its pathway is lipid metabolism; fatty acid metabolism. Degrades bioactive fatty acid amides to their corresponding acids, with the following preference: N-palmitoylethanolamine &gt; N-myristoylethanolamine &gt; N-stearoylethanolamine &gt; N-oleoylethanolamine &gt; N-linoleoylethanolamine &gt; N-arachidonoylethanolamine. This chain is N-acylethanolamine-hydrolyzing acid amidase, found in Mus musculus (Mouse).